A 279-amino-acid polypeptide reads, in one-letter code: Diaminopimelate epimerase (279 aa).

Positions 11 and 64 each coordinate substrate. Cys73 functions as the Proton donor in the catalytic mechanism. Residues 74 to 75 (GN), Asn170, and 187 to 188 (ER) each bind substrate. Cys196 acts as the Proton acceptor in catalysis. A substrate-binding site is contributed by 197 to 198 (GS). Positions 255–279 (NTDHQRRRHSLSRSPSGRPRLQECR) are disordered.

The protein belongs to the diaminopimelate epimerase family. As to quaternary structure, homodimer.

It localises to the cytoplasm. It catalyses the reaction (2S,6S)-2,6-diaminopimelate = meso-2,6-diaminopimelate. Its pathway is amino-acid biosynthesis; L-lysine biosynthesis via DAP pathway; DL-2,6-diaminopimelate from LL-2,6-diaminopimelate: step 1/1. Catalyzes the stereoinversion of LL-2,6-diaminopimelate (L,L-DAP) to meso-diaminopimelate (meso-DAP), a precursor of L-lysine. This chain is Diaminopimelate epimerase, found in Methanopyrus kandleri (strain AV19 / DSM 6324 / JCM 9639 / NBRC 100938).